The chain runs to 306 residues: tRNA pseudouridine synthase B (306 aa).

Catalysis depends on aspartate 43, which acts as the Nucleophile.

It belongs to the pseudouridine synthase TruB family. Type 1 subfamily.

The catalysed reaction is uridine(55) in tRNA = pseudouridine(55) in tRNA. Its function is as follows. Responsible for synthesis of pseudouridine from uracil-55 in the psi GC loop of transfer RNAs. This chain is tRNA pseudouridine synthase B, found in Anaplasma marginale (strain St. Maries).